Consider the following 416-residue polypeptide: Phosphoglycerate kinase (416 aa).

Val-23, Asp-24, Phe-25, Asn-26, Asn-38, Arg-39, Ser-62, His-63, Gly-65, Arg-66, Leu-121, Arg-122, His-169, and Arg-170 together coordinate (2R)-3-phosphoglycerate. Gly-213 lines the ADP pocket. Residue Gly-213 coordinates CDP. 2 residues coordinate AMP: Ala-214 and Lys-215. ATP contacts are provided by Ala-214 and Lys-215. Ala-214 serves as a coordination point for Mg(2+). Asp-218 is a binding site for CDP. A Mg(2+)-binding site is contributed by Asp-218. Position 219 (Lys-219) interacts with AMP. ATP is bound at residue Lys-219. Gly-237 contacts ADP. Gly-237 contributes to the CDP binding site. Residues Gly-238 and Gly-312 each coordinate AMP. ATP is bound by residues Gly-238 and Gly-312. Residues Gly-337 and Phe-342 each coordinate CDP. Phe-342 provides a ligand contact to ADP. Glu-343 is a binding site for AMP. Position 374 (Asp-374) interacts with Mg(2+). Thr-375 serves as a coordination point for ATP.

This sequence belongs to the phosphoglycerate kinase family. As to quaternary structure, monomer. Mg(2+) is required as a cofactor.

The catalysed reaction is (2R)-3-phosphoglycerate + ATP = (2R)-3-phospho-glyceroyl phosphate + ADP. It participates in carbohydrate degradation; glycolysis; pyruvate from D-glyceraldehyde 3-phosphate: step 2/5. The polypeptide is Phosphoglycerate kinase (PGK) (Plasmodium falciparum (isolate 3D7)).